The chain runs to 249 residues: Pyridoxamine 5'-phosphate oxidase family protein ustO (249 aa).

21 to 24 is a binding site for substrate; the sequence is LFFV. Residues 76–81, 91–92, R105, and 163–164 each bind FMN; these read ATVMFC and RL. 215-217 serves as a coordination point for substrate; that stretch reads ASY. Residues 227–247 form a helical membrane-spanning segment; sequence TGMALMFLVMVVAQWVGYVLY.

The protein belongs to the pyridoxamine 5'-phosphate oxidase family. FMN serves as cofactor.

It is found in the membrane. It functions in the pathway mycotoxin biosynthesis. In terms of biological role, pyridoxamine 5'-phosphate oxidase family protein; part of the gene cluster that mediates the biosynthesis of the secondary metabolite ustiloxin B, an antimitotic tetrapeptide. First, ustA is processed by the subtilisin-like endoprotease Kex2 that is outside the ustiloxin B gene cluster, at the C-terminal side of Arg-Lys, after transfer to Golgi apparatus through the endoplasmic reticulum (ER). Cleavage by KEX2 generates 16 peptides YAIG-I to YAIG-XVI. To process the precursor peptide further, at least two peptidases are necessary to cleave the N-terminal and C-terminal sides of the Tyr-Ala-Ile-Gly core peptide which serves as backbone for the synthesis of ustiloxin B, through cyclization and modification of the tyrosine with a non-protein coding amino acid, norvaline. One of the two peptidases must be the serine peptidase ustP; and the other pepdidase is probably ustH. Macrocyclization of the core peptide derived from ustA requires the tyrosinase ustQ, as well as the homologous oxidases ustYa and ustYb, and leads to the production of the first cyclization product N-desmethylustiloxin F. For the formation of N-desmethylustiloxin F, three oxidation steps are required, hydroxylation at the benzylic position, hydroxylation at either the aromatic ring of Tyr or beta-position of Ile, and oxidative cyclization. UstQ may catalyze the oxidation of a phenol moiety, whereas the ustYa and ustYb are most likely responsible for the remaining two-step oxidations. N-desmethylustiloxin F is then methylated by ustM to yield ustiloxin F which in turn substrate of the cytochrome P450 monooxygenase ustC which catalyzes the formation of S-deoxyustiloxin H. The flavoprotein monooxygenases ustF1 and ustF2 then participate in the modification of the side chain of S-deoxyustiloxin H, leading to the synthesis of an oxime intermediate, via ustiloxin H. Finally, carboxylative dehydration performed by the cysteine desulfurase-like protein ustD yields ustiloxin B. This is Pyridoxamine 5'-phosphate oxidase family protein ustO from Aspergillus flavus (strain ATCC 200026 / FGSC A1120 / IAM 13836 / NRRL 3357 / JCM 12722 / SRRC 167).